The primary structure comprises 402 residues: Phosphoglycerate kinase (402 aa).

Residues 24–26 (DFN), R41, 64–67 (HMGR), R123, and R156 contribute to the substrate site. Residues K207, G298, E329, and 358-361 (GGDS) contribute to the ATP site.

Belongs to the phosphoglycerate kinase family. Monomer.

The protein resides in the cytoplasm. The enzyme catalyses (2R)-3-phosphoglycerate + ATP = (2R)-3-phospho-glyceroyl phosphate + ADP. Its pathway is carbohydrate degradation; glycolysis; pyruvate from D-glyceraldehyde 3-phosphate: step 2/5. This is Phosphoglycerate kinase from Microcystis aeruginosa (strain NIES-843 / IAM M-2473).